We begin with the raw amino-acid sequence, 156 residues long: Peroxisomal membrane associated protein 20 (156 aa).

The Thioredoxin domain occupies 2–156 (VAVGSTLPKV…SSADKVLSSL (155 aa)). C43 acts as the Cysteine sulfenic acid (-SOH) intermediate in catalysis.

It belongs to the peroxiredoxin family. Prx5 subfamily. As to quaternary structure, homodimer; disulfide-linked, upon oxidation.

It is found in the cytoplasm. It localises to the nucleus. Functionally, may act as a chaperone rather than a peroxidase. Has no thioredoxin-dependent peroxidase activity. Shows weak chaperone activity. In Schizosaccharomyces pombe (strain 972 / ATCC 24843) (Fission yeast), this protein is Peroxisomal membrane associated protein 20.